Reading from the N-terminus, the 160-residue chain is Transcription elongation factor GreA (160 aa).

Residues 2–84 adopt a coiled-coil conformation; sequence KNTVNDKILL…SKAKIIKADL (83 aa).

The protein belongs to the GreA/GreB family.

In terms of biological role, necessary for efficient RNA polymerase transcription elongation past template-encoded arresting sites. The arresting sites in DNA have the property of trapping a certain fraction of elongating RNA polymerases that pass through, resulting in locked ternary complexes. Cleavage of the nascent transcript by cleavage factors such as GreA or GreB allows the resumption of elongation from the new 3'terminus. GreA releases sequences of 2 to 3 nucleotides. The protein is Transcription elongation factor GreA of Mesomycoplasma hyopneumoniae (strain 232) (Mycoplasma hyopneumoniae).